A 229-amino-acid polypeptide reads, in one-letter code: GTP cyclohydrolase 1 (229 aa).

Residues 1 to 26 are disordered; sequence MDAKIKPLRGGKPADARPEFQPAELD. 3 residues coordinate Zn(2+): C118, H121, and C189.

The protein belongs to the GTP cyclohydrolase I family. In terms of assembly, toroid-shaped homodecamer, composed of two pentamers of five dimers.

It carries out the reaction GTP + H2O = 7,8-dihydroneopterin 3'-triphosphate + formate + H(+). It functions in the pathway cofactor biosynthesis; 7,8-dihydroneopterin triphosphate biosynthesis; 7,8-dihydroneopterin triphosphate from GTP: step 1/1. The chain is GTP cyclohydrolase 1 from Rhodopseudomonas palustris (strain BisB5).